We begin with the raw amino-acid sequence, 389 residues long: MKFVDEAVIRVEAGDGGSGCVSFRREKYVPDGGPDGGDGGDGGSVYLQADESYNTLIDFQFERFHRAERGKNGRGRDCTGHGGEDLILTVPVGTRAIDEETQESLGDLTKHGQRMLVAKGGFHGLGNTRFKSSTNRAPRQKTLGTPGEVRSLKLELMLLADVGLLGMPNAGKSTFIRSVSRAKPKVADYPFTTLVPNLGVVNPRHGQSFVIADIPGLIEGAADGAGLGVQFLKHLERCRVLLHILDIDPIDGSDPVESARAIVAELEKHSPKLASKPRWLVINKTDLMLEDELKERVENIVKELEWEGDVYTISAYNREGTEALSLKLIDFIEALPPEEEIDKEAEVEFKWDNYHENANESLNENFEDDFDDDDDFDDDDYDVKVIYQR.

The Obg domain maps to 1–159; sequence MKFVDEAVIR…RSLKLELMLL (159 aa). Residues 122-144 form a disordered region; sequence FHGLGNTRFKSSTNRAPRQKTLG. In terms of domain architecture, OBG-type G spans 160–333; it reads ADVGLLGMPN…LSLKLIDFIE (174 aa). GTP contacts are provided by residues 166-173, 191-195, 213-216, 283-286, and 314-316; these read GMPNAGKS, FTTLV, DIPG, NKTD, and SAY. Residues Ser-173 and Thr-193 each coordinate Mg(2+).

It belongs to the TRAFAC class OBG-HflX-like GTPase superfamily. OBG GTPase family. Monomer. Mg(2+) is required as a cofactor.

It is found in the cytoplasm. In terms of biological role, an essential GTPase which binds GTP, GDP and possibly (p)ppGpp with moderate affinity, with high nucleotide exchange rates and a fairly low GTP hydrolysis rate. Plays a role in control of the cell cycle, stress response, ribosome biogenesis and in those bacteria that undergo differentiation, in morphogenesis control. The sequence is that of GTPase Obg from Shewanella woodyi (strain ATCC 51908 / MS32).